Reading from the N-terminus, the 820-residue chain is DNA replication helicase (820 aa).

90 to 97 (GTAGAGKT) is an ATP binding site.

It belongs to the herpesviridae helicase family. As to quaternary structure, associates with the primase and the primase-associated factor to form the helicase-primase complex.

It localises to the host nucleus. Its function is as follows. Component of the helicase/primase complex. Unwinds the DNA at the replication forks and generates single-stranded DNA for both leading and lagging strand synthesis. The primase synthesizes short RNA primers on the lagging strand that the polymerase elongates using dNTPs. Possesses helicase-like motifs and therefore may act as the helicase subunit of the complex. The chain is DNA replication helicase from Human herpesvirus 7 (strain JI) (HHV-7).